We begin with the raw amino-acid sequence, 105 residues long: MALRYPMAVGLNKGHKVTKNVSKPRHSRRRRRLTKHTKFVRDMIREVCGFAPYERRAMELLKVSKDKRALKFIKKRVGTHIRAKRKREELSSVLAAMRKAAAKKD.

The segment at 9–31 (VGLNKGHKVTKNVSKPRHSRRRR) is disordered. Residues 13–31 (KGHKVTKNVSKPRHSRRRR) show a composition bias toward basic residues. N6-acetyllysine is present on Lys62.

It belongs to the eukaryotic ribosomal protein eL36 family. In terms of assembly, component of the large ribosomal subunit.

Its subcellular location is the cytoplasm. The protein resides in the cytosol. Component of the large ribosomal subunit. The ribosome is a large ribonucleoprotein complex responsible for the synthesis of proteins in the cell. In Oryctolagus cuniculus (Rabbit), this protein is Large ribosomal subunit protein eL36 (RPL36).